The primary structure comprises 248 residues: Myelin protein P0 (248 aa).

The signal sequence occupies residues 1 to 29; sequence MAPGAPSSSPSPILAALLFSSLVLSPTLA. The 114-residue stretch at 30-143 folds into the Ig-like V-type domain; it reads IVVYTDREVY…DIVGKTSQVT (114 aa). Residues 30–153 lie on the Extracellular side of the membrane; the sequence is IVVYTDREVY…LYVFEKVPTR (124 aa). Cysteines 50 and 127 form a disulfide. The N-linked (GlcNAc...) (complex) asparagine glycan is linked to asparagine 122. The helical transmembrane segment at 154-179 threads the bilayer; that stretch reads YGVVLGAVIGGILGVVLLLLLLFYLI. Over 180-248 the chain is Cytoplasmic; the sequence is RYCWLRRQAA…GLGESRKDKK (69 aa). Serine 210 carries the post-translational modification Phosphoserine; by PKC. A disordered region spans residues 222–248; it reads MLDHSRSTKAASEKKSKGLGESRKDKK. Residues 224–248 are compositionally biased toward basic and acidic residues; it reads DHSRSTKAASEKKSKGLGESRKDKK. Residues serine 226 and serine 228 each carry the phosphoserine modification. At serine 233 the chain carries Phosphoserine; by PKC. Phosphoserine is present on serine 237. Serine 243 is modified (phosphoserine; by PKC).

Belongs to the myelin P0 protein family. Homodimer and homotetramer. Post-translationally, N-glycosylated; contains sulfate-substituted glycan. As to expression, found only in peripheral nervous system Schwann cells.

The protein resides in the cell membrane. Functionally, is an adhesion molecule necessary for normal myelination in the peripheral nervous system. It mediates adhesion between adjacent myelin wraps and ultimately drives myelin compaction. In Rattus norvegicus (Rat), this protein is Myelin protein P0 (Mpz).